Consider the following 46-residue polypeptide: uncharacterized protein (46 aa).

It is found in the plastid. It localises to the chloroplast. This is an uncharacterized protein from Trieres chinensis (Marine centric diatom).